Here is a 460-residue protein sequence, read N- to C-terminus: MSLYSSLPSIDKLLKTPEGARLSHEFGHTAVVNICRQLIEQGREYIKNENKLLPVFQDISDTLREIELQLHAQSQVKIQSVHNLTGTILHTNLGRALWSDAAQHAALTSMSHNVALEYDLEEGKRSHRDHYISDLLCQLTGAEAACIVNNNAAAVLLMLATFAQGKEVIISRGELIEIGGAFRIPDIMQQAGCKLVEVGTTNRTHLSDYRHAINENTAFLMKVHSSNYQICGFTKSVTEAELVTLAREFNLPVMTDLGSGALVDLAQYGLPKEPTVQEKWAQGVELISFSGDKLLGGPQAGIIVGKKAWIDRLQTHPLKRALRCDKVILAGLEATLRLYLQPEKLSQHLTTLRLLTQPVEALHEQAEQLQSVLLTKLTTDYSVAITNSVAQIGSGSQPMATIPSVAVTISTEKAGKLTALLQRFKALPQPIICRVEKEKIWLDLRGLADIDSLLKTIMQL.

Lysine 293 carries the N6-(pyridoxal phosphate)lysine modification.

It belongs to the SelA family. It depends on pyridoxal 5'-phosphate as a cofactor.

The protein localises to the cytoplasm. It catalyses the reaction L-seryl-tRNA(Sec) + selenophosphate + H(+) = L-selenocysteinyl-tRNA(Sec) + phosphate. The protein operates within aminoacyl-tRNA biosynthesis; selenocysteinyl-tRNA(Sec) biosynthesis; selenocysteinyl-tRNA(Sec) from L-seryl-tRNA(Sec) (bacterial route): step 1/1. Converts seryl-tRNA(Sec) to selenocysteinyl-tRNA(Sec) required for selenoprotein biosynthesis. In Pasteurella multocida (strain Pm70), this protein is L-seryl-tRNA(Sec) selenium transferase.